The sequence spans 583 residues: Pescadillo (583 aa).

A coiled-coil region spans residues 275 to 329; that stretch reads EKLSALSASLARMVASVEEEEAELDHFPTEGEDQEKMEVREKMEQQQSKQKKLFE. Residues 323 to 416 enclose the BRCT domain; the sequence is KQKKLFEGLK…IQLPVEEYFL (94 aa). 2 disordered regions span residues 448 to 526 and 558 to 583; these read RGEK…EEKA and ANKL…KKKC. Acidic residues predominate over residues 455 to 489; sequence EEDEEEEGEEEEDDEEDEEDDEQSEDEEEAEEEAN. Basic and acidic residues predominate over residues 512–526; it reads AKAENRARAAEEEKA.

Belongs to the pescadillo family. In terms of assembly, component of the PeBoW complex, composed of bop1, pes1 and wdr12. The complex is held together by bop1, which interacts with pes1 via its N-terminal domain and with wdr12 via a high-affinity interaction between the seven-bladed beta-propeller domains of the 2 proteins. The PeBoW complex associates with the 66S pre-ribosome.

The protein localises to the nucleus. It localises to the nucleolus. The protein resides in the nucleoplasm. Component of the PeBoW complex, which is required for maturation of 28S and 5.8S ribosomal RNAs and formation of the 60S ribosome. This is Pescadillo (pes) from Danio rerio (Zebrafish).